Reading from the N-terminus, the 310-residue chain is Thioredoxin reductase (310 aa).

Asn-34–Gln-41 contacts FAD. A disulfide bond links Cys-135 and Cys-138. Position 281–290 (Asp-281–Ala-290) interacts with FAD.

It belongs to the class-II pyridine nucleotide-disulfide oxidoreductase family. In terms of assembly, homodimer. It depends on FAD as a cofactor.

The protein resides in the cytoplasm. The enzyme catalyses [thioredoxin]-dithiol + NADP(+) = [thioredoxin]-disulfide + NADPH + H(+). The protein is Thioredoxin reductase (trxB) of Rickettsia felis (strain ATCC VR-1525 / URRWXCal2) (Rickettsia azadi).